The chain runs to 70 residues: UPF0352 protein Sden_2336 (70 aa).

The protein belongs to the UPF0352 family.

This chain is UPF0352 protein Sden_2336, found in Shewanella denitrificans (strain OS217 / ATCC BAA-1090 / DSM 15013).